The chain runs to 1997 residues: Receptor-type tyrosine-protein phosphatase beta (1997 aa).

An N-terminal signal peptide occupies residues 1–22 (MLSHGAGLALWITLSLLQTGLA). Fibronectin type-III domains follow at residues 23 to 111 (EPER…TDPL), 112 to 207 (PPAR…SPVK), 203 to 288 (PSPV…VRTA), 291 to 378 (EVSN…TFPD), 379 to 471 (KVAN…LAVL), 467 to 552 (PLAV…KGRT), 556 to 641 (QVTD…EGRT), 642 to 729 (VPSS…QERT), 730 to 829 (VPDK…TLRN), 819 to 906 (PEPV…GFTV), 909 to 1001 (AVKN…VQGV), 995 to 1083 (PASV…EGRT), 1087 to 1175 (AVTD…VPAS), 1173 to 1260 (PASV…SRTA), 1260 to 1356 (APSP…TKPD), 1357 to 1448 (KIQN…IDRP), and 1458 to 1554 (NEKD…EMES). Residues 23–1621 (EPERCNFTLA…ESEPLFGAIE (1599 aa)) lie on the Extracellular side of the membrane. 16 N-linked (GlcNAc...) asparagine glycosylation sites follow: Asn-28, Asn-53, Asn-75, Asn-172, Asn-198, Asn-267, Asn-321, Asn-414, Asn-421, Asn-479, Asn-544, Asn-574, Asn-598, Asn-652, Asn-721, and Asn-829. N-linked (GlcNAc...) asparagine glycosylation is found at Asn-1040, Asn-1096, Asn-1163, Asn-1185, Asn-1212, Asn-1274, Asn-1367, Asn-1470, Asn-1474, and Asn-1518. Residues 1622–1642 (GVSAGLFLIGMLVAVVALLIC) form a helical membrane-spanning segment. Over 1643-1997 (RQKVSHGRER…YHRDPVYSRH (355 aa)) the chain is Cytoplasmic. Residues 1703–1963 (LSKEYEELKD…VYLHQCVRDV (261 aa)) form the Tyrosine-protein phosphatase domain. Substrate-binding positions include Asp-1870, 1904-1910 (CSAGVGR), and Gln-1948. Cys-1904 serves as the catalytic Phosphocysteine intermediate. Tyr-1981 carries the post-translational modification Phosphotyrosine.

This sequence belongs to the protein-tyrosine phosphatase family. Receptor class 3 subfamily. Monomer. Interacts with TEK. Interacts via fibronectin type-III 17 domain with CDH5. Detected in a complex with CNTN1 and NRCAM. Interacts (phosphorylated form) with FYN and GRB2. Interacts with IGFBP2.

It localises to the membrane. It carries out the reaction O-phospho-L-tyrosyl-[protein] + H2O = L-tyrosyl-[protein] + phosphate. Its function is as follows. Plays an important role in blood vessel remodeling and angiogenesis. Not necessary for the initial formation of blood vessels, but is essential for their maintenance and remodeling. Can induce dephosphorylation of TEK/TIE2, CDH5/VE-cadherin and KDR/VEGFR-2. Regulates angiopoietin-TIE2 signaling in endothelial cells. Acts as a negative regulator of TIE2, and controls TIE2 driven endothelial cell proliferation, which in turn affects blood vessel remodeling during embryonic development and determines blood vessel size during perinatal growth. Essential for the maintenance of endothelial cell contact integrity and for the adhesive function of VE-cadherin in endothelial cells and this requires the presence of plakoglobin. The sequence is that of Receptor-type tyrosine-protein phosphatase beta (PTPRB) from Homo sapiens (Human).